The following is a 331-amino-acid chain: Ornithine carbamoyltransferase (331 aa).

Carbamoyl phosphate is bound by residues 55–58 (STRT), Gln82, Arg106, and 133–136 (HPTQ). L-ornithine is bound by residues Asn166, Asp230, and 234–235 (SM). Residues 272–273 (CL) and Arg317 contribute to the carbamoyl phosphate site.

It belongs to the aspartate/ornithine carbamoyltransferase superfamily. OTCase family.

It is found in the cytoplasm. It carries out the reaction carbamoyl phosphate + L-ornithine = L-citrulline + phosphate + H(+). It participates in amino-acid biosynthesis; L-arginine biosynthesis; L-arginine from L-ornithine and carbamoyl phosphate: step 1/3. In terms of biological role, reversibly catalyzes the transfer of the carbamoyl group from carbamoyl phosphate (CP) to the N(epsilon) atom of ornithine (ORN) to produce L-citrulline. This is Ornithine carbamoyltransferase from Neisseria meningitidis serogroup C / serotype 2a (strain ATCC 700532 / DSM 15464 / FAM18).